The chain runs to 447 residues: Cysteine--tRNA ligase (447 aa).

Cys28 is a Zn(2+) binding site. The 'HIGH' region signature appears at 30-40; sequence PTVYNYIHVGN. Zn(2+) contacts are provided by Cys211, His236, and Glu240. Positions 268-272 match the 'KMSKS' region motif; sequence KMSKS. ATP is bound at residue Lys271.

This sequence belongs to the class-I aminoacyl-tRNA synthetase family. Monomer. Zn(2+) is required as a cofactor.

The protein resides in the cytoplasm. The enzyme catalyses tRNA(Cys) + L-cysteine + ATP = L-cysteinyl-tRNA(Cys) + AMP + diphosphate. This Streptococcus pneumoniae (strain ATCC BAA-255 / R6) protein is Cysteine--tRNA ligase.